The primary structure comprises 355 residues: Tetraacyldisaccharide 4'-kinase (355 aa).

54-61 serves as a coordination point for ATP; that stretch reads TVGGAGKT.

Belongs to the LpxK family.

It catalyses the reaction a lipid A disaccharide + ATP = a lipid IVA + ADP + H(+). Its pathway is glycolipid biosynthesis; lipid IV(A) biosynthesis; lipid IV(A) from (3R)-3-hydroxytetradecanoyl-[acyl-carrier-protein] and UDP-N-acetyl-alpha-D-glucosamine: step 6/6. Its function is as follows. Transfers the gamma-phosphate of ATP to the 4'-position of a tetraacyldisaccharide 1-phosphate intermediate (termed DS-1-P) to form tetraacyldisaccharide 1,4'-bis-phosphate (lipid IVA). The sequence is that of Tetraacyldisaccharide 4'-kinase from Rhizobium rhizogenes (strain K84 / ATCC BAA-868) (Agrobacterium radiobacter).